A 218-amino-acid polypeptide reads, in one-letter code: Octanoyltransferase (218 aa).

In terms of domain architecture, BPL/LPL catalytic spans 27-210; it reads TGGEDTLYLV…QFLAIFTHPA (184 aa). Substrate contacts are provided by residues 72-79, 139-141, and 152-154; these read RGGNITCH, SIG, and GLA. C170 (acyl-thioester intermediate) is an active-site residue.

The protein belongs to the LipB family.

The protein resides in the cytoplasm. The enzyme catalyses octanoyl-[ACP] + L-lysyl-[protein] = N(6)-octanoyl-L-lysyl-[protein] + holo-[ACP] + H(+). It functions in the pathway protein modification; protein lipoylation via endogenous pathway; protein N(6)-(lipoyl)lysine from octanoyl-[acyl-carrier-protein]: step 1/2. In terms of biological role, catalyzes the transfer of endogenously produced octanoic acid from octanoyl-acyl-carrier-protein onto the lipoyl domains of lipoate-dependent enzymes. Lipoyl-ACP can also act as a substrate although octanoyl-ACP is likely to be the physiological substrate. In Nitratidesulfovibrio vulgaris (strain ATCC 29579 / DSM 644 / CCUG 34227 / NCIMB 8303 / VKM B-1760 / Hildenborough) (Desulfovibrio vulgaris), this protein is Octanoyltransferase.